The primary structure comprises 305 residues: MNQENTQIVAAFYKFVSLPDFTEKQVPLLAYCLAQDIKGTILLAKEGINGTIAGSRLSIDNVLSYLRADLRLQDLEHKESTADTPPFERMKVRLKKEIVTLGLPEVDPNEQVGTYVTPEEWNELISDPEVIVIDTRNDYEVHIGTFQGAQNPQTNSFRDFPEYVRQNLDPNQHKKVAMFCTGGIRCEKASSFMLSQGFAEVYHLKGGILKYLEQIPPEESLWQGECFVFDERIAVVHGLEPGTHELCFCCGHPLAEEDKASPQYEEGISCSHCFDSLTEDKRTRQQEKWRQYQLKNSHSLGNSKL.

The Rhodanese domain maps to 126-220 (SDPEVIVIDT…YLEQIPPEES (95 aa)). C180 serves as the catalytic Cysteine persulfide intermediate.

Belongs to the TrhO family.

The enzyme catalyses uridine(34) in tRNA + AH2 + O2 = 5-hydroxyuridine(34) in tRNA + A + H2O. Its function is as follows. Catalyzes oxygen-dependent 5-hydroxyuridine (ho5U) modification at position 34 in tRNAs. The chain is tRNA uridine(34) hydroxylase from Trichormus variabilis (strain ATCC 29413 / PCC 7937) (Anabaena variabilis).